An 860-amino-acid chain; its full sequence is Eukaryotic translation initiation factor 3 subunit C (860 aa).

The segment at 1 to 79 is disordered; it reads MSSRFFHGGS…ESDEEEDRVT (79 aa). Composition is skewed to acidic residues over residues 16-53 and 67-76; these read SSDE…DDEA and DLDESDEEED. Residues 598-772 enclose the PCI domain; the sequence is FHMHINLELL…NAIVFRKGVE (175 aa). A disordered region spans residues 808 to 860; the sequence is AFQRDQGPGGRLGRGQGRGGQRTAGGRPPIGGQQRRPGGQQFSGGALGGAIKA. Gly residues predominate over residues 814-830; it reads GPGGRLGRGQGRGGQRT. Residues 831–847 are compositionally biased toward low complexity; sequence AGGRPPIGGQQRRPGGQ. Over residues 848-860 the composition is skewed to gly residues; sequence QFSGGALGGAIKA.

Belongs to the eIF-3 subunit C family. Component of the eukaryotic translation initiation factor 3 (eIF-3) complex.

It localises to the cytoplasm. Its function is as follows. Component of the eukaryotic translation initiation factor 3 (eIF-3) complex, which is involved in protein synthesis of a specialized repertoire of mRNAs and, together with other initiation factors, stimulates binding of mRNA and methionyl-tRNAi to the 40S ribosome. The eIF-3 complex specifically targets and initiates translation of a subset of mRNAs involved in cell proliferation. This chain is Eukaryotic translation initiation factor 3 subunit C, found in Coccidioides immitis (strain RS) (Valley fever fungus).